The sequence spans 1159 residues: Ferroxidase HEPHL1 (1159 aa).

The signal sequence occupies residues 1 to 24 (MPRKQPAGCIFLLTFLGLSGLVGT). 6 consecutive Plastocyanin-like domains span residues 25 to 207 (VTRT…LLVC), 218 to 366 (TRND…VDNC), 379 to 561 (QRRY…LLVC), 571 to 719 (TQKG…VSSC), 731 to 907 (MIRT…LITC), and 915 to 1092 (KGRR…VPSN). Over 25 to 1114 (VTRTYYIGIV…KNLGPTGAKA (1090 aa)) the chain is Extracellular. 2 residues coordinate Cu cation: histidine 127 and histidine 129. Asparagine 161 carries N-linked (GlcNAc...) asparagine glycosylation. Cysteine 181 and cysteine 207 are disulfide-bonded. Cu cation contacts are provided by histidine 187 and histidine 189. N-linked (GlcNAc...) asparagine glycosylation is present at asparagine 236. Cysteine 285 and cysteine 366 are oxidised to a cystine. Histidine 304, cysteine 347, and histidine 352 together coordinate Cu cation. A glycan (N-linked (GlcNAc...) asparagine) is linked at asparagine 407. A disulfide bond links cysteine 535 and cysteine 561. N-linked (GlcNAc...) asparagine glycosylation is present at asparagine 589. Residues cysteine 638 and cysteine 719 are joined by a disulfide bond. Histidine 657, cysteine 700, histidine 705, and methionine 710 together coordinate Cu cation. Residue asparagine 772 is glycosylated (N-linked (GlcNAc...) asparagine). A disulfide bond links cysteine 881 and cysteine 907. The N-linked (GlcNAc...) asparagine glycan is linked to asparagine 935. Cu cation-binding residues include histidine 1003, histidine 1006, histidine 1008, histidine 1048, cysteine 1049, histidine 1050, histidine 1054, and methionine 1059. Residues 1115–1135 (ALVILFIIGLLLLITTVILSL) form a helical membrane-spanning segment. At 1136–1159 (RLCSAMKQTDYQQVQSCALPTDAL) the chain is on the cytoplasmic side.

The protein belongs to the multicopper oxidase family. The cofactor is Cu cation.

Its subcellular location is the membrane. The enzyme catalyses 4 Fe(2+) + O2 + 4 H(+) = 4 Fe(3+) + 2 H2O. Is a copper-binding glycoprotein with ferroxidase activity. It oxidizes Fe(2+) to Fe(3+) without releasing radical oxygen species. May be involved in the regulation of intracellular iron content. This is Ferroxidase HEPHL1 (HEPHL1) from Homo sapiens (Human).